The sequence spans 336 residues: Ketol-acid reductoisomerase (NADP(+)) (336 aa).

Positions 2 to 182 (AKIYYQQDCN…GGARAGVLET (181 aa)) constitute a KARI N-terminal Rossmann domain. Residues 25-28 (YGSQ), Ser-51, Ser-53, and 83-86 (DEKQ) contribute to the NADP(+) site. The active site involves His-108. NADP(+) is bound at residue Gly-134. The 146-residue stretch at 183-328 (TFREETETDL…AELRGLMSWT (146 aa)) folds into the KARI C-terminal knotted domain. Residues Asp-191, Glu-195, Glu-227, and Glu-231 each coordinate Mg(2+). Substrate is bound at residue Ser-252.

It belongs to the ketol-acid reductoisomerase family. It depends on Mg(2+) as a cofactor.

The catalysed reaction is (2R)-2,3-dihydroxy-3-methylbutanoate + NADP(+) = (2S)-2-acetolactate + NADPH + H(+). It catalyses the reaction (2R,3R)-2,3-dihydroxy-3-methylpentanoate + NADP(+) = (S)-2-ethyl-2-hydroxy-3-oxobutanoate + NADPH + H(+). It participates in amino-acid biosynthesis; L-isoleucine biosynthesis; L-isoleucine from 2-oxobutanoate: step 2/4. It functions in the pathway amino-acid biosynthesis; L-valine biosynthesis; L-valine from pyruvate: step 2/4. Functionally, involved in the biosynthesis of branched-chain amino acids (BCAA). Catalyzes an alkyl-migration followed by a ketol-acid reduction of (S)-2-acetolactate (S2AL) to yield (R)-2,3-dihydroxy-isovalerate. In the isomerase reaction, S2AL is rearranged via a Mg-dependent methyl migration to produce 3-hydroxy-3-methyl-2-ketobutyrate (HMKB). In the reductase reaction, this 2-ketoacid undergoes a metal-dependent reduction by NADPH to yield (R)-2,3-dihydroxy-isovalerate. The protein is Ketol-acid reductoisomerase (NADP(+)) of Lachnoclostridium phytofermentans (strain ATCC 700394 / DSM 18823 / ISDg) (Clostridium phytofermentans).